We begin with the raw amino-acid sequence, 819 residues long: Lon protease (819 aa).

The disordered stretch occupies residues 1-36 (MDSTTNSDSPILDPNPEDVEKLLDESEEESEDQSTE). The Lon N-terminal domain occupies 43–240 (LFILPLNKRP…KALILLKKEL (198 aa)). ATP is bound at residue 393–400 (GPPGVGKT). The region spanning 635–817 (STPVGVATGL…DDVLKVAFPK (183 aa)) is the Lon proteolytic domain. Active-site residues include S723 and K766.

It belongs to the peptidase S16 family. In terms of assembly, homohexamer. Organized in a ring with a central cavity.

The protein localises to the cytoplasm. The catalysed reaction is Hydrolysis of proteins in presence of ATP.. ATP-dependent serine protease that mediates the selective degradation of mutant and abnormal proteins as well as certain short-lived regulatory proteins. Required for cellular homeostasis and for survival from DNA damage and developmental changes induced by stress. Degrades polypeptides processively to yield small peptide fragments that are 5 to 10 amino acids long. Binds to DNA in a double-stranded, site-specific manner. The protein is Lon protease of Chlamydia pneumoniae (Chlamydophila pneumoniae).